We begin with the raw amino-acid sequence, 227 residues long: tRNA (guanine-N(7)-)-methyltransferase (227 aa).

S-adenosyl-L-methionine contacts are provided by E57, E82, D109, and D132. D132 is an active-site residue. Residues K136, D168, and 205–208 (TKFE) contribute to the substrate site.

The protein belongs to the class I-like SAM-binding methyltransferase superfamily. TrmB family.

It catalyses the reaction guanosine(46) in tRNA + S-adenosyl-L-methionine = N(7)-methylguanosine(46) in tRNA + S-adenosyl-L-homocysteine. Its pathway is tRNA modification; N(7)-methylguanine-tRNA biosynthesis. In terms of biological role, catalyzes the formation of N(7)-methylguanine at position 46 (m7G46) in tRNA. This is tRNA (guanine-N(7)-)-methyltransferase from Leifsonia xyli subsp. xyli (strain CTCB07).